Here is a 407-residue protein sequence, read N- to C-terminus: SERPINE1 mRNA-binding protein 1 (407 aa).

Residue Ser25 is modified to Phosphoserine. The segment at 33–227 (AAENKKKEAG…GSGSHNWGTV (195 aa)) is disordered. A compositionally biased stretch (low complexity) spans 51-68 (AKSAAQAAAQTNSNAAGK). N6-acetyllysine; alternate is present on Lys52. Residue Lys52 forms a Glycyl lysine isopeptide (Lys-Gly) (interchain with G-Cter in SUMO1); alternate linkage. Lys68 is modified (N6-acetyllysine). Composition is skewed to basic and acidic residues over residues 70–80 (LRKESQKDRKN), 89–114 (VDKK…RRPD), and 122–162 (KIID…DRPI). Lys102 participates in a covalent cross-link: Glycyl lysine isopeptide (Lys-Gly) (interchain with G-Cter in SUMO1); alternate. Lys102 participates in a covalent cross-link: Glycyl lysine isopeptide (Lys-Gly) (interchain with G-Cter in SUMO2). Residue Lys102 forms a Glycyl lysine isopeptide (Lys-Gly) (interchain with G-Cter in SUMO2); alternate linkage. N6-acetyllysine is present on residues Lys122 and Lys140. Gly residues predominate over residues 164 to 182 (GRGGLGRGRGGRGRGMGRG). Omega-N-methylarginine occurs at positions 165 and 188. Basic and acidic residues predominate over residues 183–199 (DGFDSRGKREFDRHSGS). Phosphoserine occurs at positions 197, 199, 203, 205, and 208. Residue Lys211 is modified to N6-acetyllysine; alternate. Lys211 participates in a covalent cross-link: Glycyl lysine isopeptide (Lys-Gly) (interchain with G-Cter in SUMO2); alternate. Arg216 bears the Omega-N-methylarginine mark. Position 221 is a phosphoserine (Ser221). The residue at position 226 (Thr226) is a Phosphothreonine. A Glycyl lysine isopeptide (Lys-Gly) (interchain with G-Cter in SUMO1); alternate cross-link involves residue Lys228. Lys228 participates in a covalent cross-link: Glycyl lysine isopeptide (Lys-Gly) (interchain with G-Cter in SUMO2); alternate. Residue Ser234 is modified to Phosphoserine. Residues 242–256 (ISYNCSDLDQSNVTE) are compositionally biased toward polar residues. 2 disordered regions span residues 242 to 291 (ISYN…TLDE) and 327 to 407 (SKSE…PALA). Positions 261–274 (GEEHPVADTENKEN) are enriched in basic and acidic residues. Residue Lys280 forms a Glycyl lysine isopeptide (Lys-Gly) (interchain with G-Cter in SUMO1); alternate linkage. Lys280 participates in a covalent cross-link: Glycyl lysine isopeptide (Lys-Gly) (interchain with G-Cter in SUMO2). Lys280 participates in a covalent cross-link: Glycyl lysine isopeptide (Lys-Gly) (interchain with G-Cter in SUMO2); alternate. Composition is skewed to basic and acidic residues over residues 281-291 (EEGPKEMTLDE) and 327-341 (SKSE…VMDH). At Lys328 the chain carries N6-acetyllysine. A Phosphoserine modification is found at Ser329. A compositionally biased stretch (gly residues) spans 362–371 (GRPGRGGRGG). Omega-N-methylarginine is present on residues Arg363, Arg366, and Arg369. A phosphoserine mark is found at Ser391 and Ser393.

This sequence belongs to the SERBP1-HABP4 family. Associates with mature 80S ribosomes. Interacts with EEF2/eEF2; interaction sequesters EEF2/eEF2 at the A-site of the ribosome, thereby blocking the interaction sites of the mRNA-tRNA complex, promoting ribosome stabilization and hibernation. Interacts with SPIN1. Interacts with CHD3 and TDRD3. Interacts with ZDHHC17 (via ANK repeats). Phosphorylation by MTOR inhibits SERBP1 and relieves ribosome hibernation.

In terms of biological role, ribosome-binding protein that promotes ribosome hibernation, a process during which ribosomes are stabilized in an inactive state and preserved from proteasomal degradation. Acts via its association with EEF2/eEF2 factor, sequestering EEF2/eEF2 at the A-site of the ribosome and promoting ribosome stabilization and storage in an inactive state. May also play a role in the regulation of mRNA stability: binds to the 3'-most 134 nt of the SERPINE1/PAI1 mRNA, a region which confers cyclic nucleotide regulation of message decay. Seems to play a role in PML-nuclear bodies formation. The polypeptide is SERPINE1 mRNA-binding protein 1 (Oryctolagus cuniculus (Rabbit)).